Consider the following 490-residue polypeptide: Aspartyl/glutamyl-tRNA(Asn/Gln) amidotransferase subunit B (490 aa).

Belongs to the GatB/GatE family. GatB subfamily. As to quaternary structure, heterotrimer of A, B and C subunits.

The enzyme catalyses L-glutamyl-tRNA(Gln) + L-glutamine + ATP + H2O = L-glutaminyl-tRNA(Gln) + L-glutamate + ADP + phosphate + H(+). It catalyses the reaction L-aspartyl-tRNA(Asn) + L-glutamine + ATP + H2O = L-asparaginyl-tRNA(Asn) + L-glutamate + ADP + phosphate + 2 H(+). Its function is as follows. Allows the formation of correctly charged Asn-tRNA(Asn) or Gln-tRNA(Gln) through the transamidation of misacylated Asp-tRNA(Asn) or Glu-tRNA(Gln) in organisms which lack either or both of asparaginyl-tRNA or glutaminyl-tRNA synthetases. The reaction takes place in the presence of glutamine and ATP through an activated phospho-Asp-tRNA(Asn) or phospho-Glu-tRNA(Gln). The protein is Aspartyl/glutamyl-tRNA(Asn/Gln) amidotransferase subunit B of Burkholderia mallei (strain NCTC 10247).